The chain runs to 236 residues: Small ribosomal subunit protein uS2c (236 aa).

Belongs to the universal ribosomal protein uS2 family.

Its subcellular location is the plastid. The protein resides in the chloroplast. This chain is Small ribosomal subunit protein uS2c (rps2), found in Nicotiana tabacum (Common tobacco).